A 160-amino-acid chain; its full sequence is 2-C-methyl-D-erythritol 2,4-cyclodiphosphate synthase (160 aa).

A divalent metal cation is bound by residues Asp-10 and His-12. 4-CDP-2-C-methyl-D-erythritol 2-phosphate contacts are provided by residues 10–12 (DVH) and 36–37 (HS). His-44 provides a ligand contact to a divalent metal cation. 4-CDP-2-C-methyl-D-erythritol 2-phosphate is bound by residues 58 to 60 (DIG), 63 to 67 (FPDTD), 102 to 108 (AQAPKMA), 134 to 137 (TTTE), Phe-141, and Arg-144.

The protein belongs to the IspF family. As to quaternary structure, homotrimer. The cofactor is a divalent metal cation.

It catalyses the reaction 4-CDP-2-C-methyl-D-erythritol 2-phosphate = 2-C-methyl-D-erythritol 2,4-cyclic diphosphate + CMP. Its pathway is isoprenoid biosynthesis; isopentenyl diphosphate biosynthesis via DXP pathway; isopentenyl diphosphate from 1-deoxy-D-xylulose 5-phosphate: step 4/6. Involved in the biosynthesis of isopentenyl diphosphate (IPP) and dimethylallyl diphosphate (DMAPP), two major building blocks of isoprenoid compounds. Catalyzes the conversion of 4-diphosphocytidyl-2-C-methyl-D-erythritol 2-phosphate (CDP-ME2P) to 2-C-methyl-D-erythritol 2,4-cyclodiphosphate (ME-CPP) with a corresponding release of cytidine 5-monophosphate (CMP). The sequence is that of 2-C-methyl-D-erythritol 2,4-cyclodiphosphate synthase from Shewanella denitrificans (strain OS217 / ATCC BAA-1090 / DSM 15013).